The sequence spans 382 residues: V-type proton ATPase subunit C 1 (382 aa).

Thr2 carries the N-acetylthreonine modification.

The protein belongs to the V-ATPase C subunit family. As to quaternary structure, V-ATPase is a heteromultimeric enzyme made up of two complexes: the ATP-hydrolytic V1 complex and the proton translocation V0 complex. The V1 complex consists of three catalytic AB heterodimers that form a heterohexamer, three peripheral stalks each consisting of EG heterodimers, one central rotor including subunits D and F, and the regulatory subunits C and H. The proton translocation complex V0 consists of the proton transport subunit a, a ring of proteolipid subunits c9c'', rotary subunit d, subunits e and f, and the accessory subunits ATP6AP1/Ac45 and ATP6AP2/PRR. As to expression, ubiquitous. Abundant in brain, liver, kidney and testis.

The protein localises to the cytoplasmic vesicle. Its subcellular location is the secretory vesicle. It is found in the synaptic vesicle membrane. It localises to the clathrin-coated vesicle membrane. Subunit of the V1 complex of vacuolar(H+)-ATPase (V-ATPase), a multisubunit enzyme composed of a peripheral complex (V1) that hydrolyzes ATP and a membrane integral complex (V0) that translocates protons. V-ATPase is responsible for acidifying and maintaining the pH of intracellular compartments and in some cell types, is targeted to the plasma membrane, where it is responsible for acidifying the extracellular environment. Subunit C is necessary for the assembly of the catalytic sector of the enzyme and is likely to have a specific function in its catalytic activity. The chain is V-type proton ATPase subunit C 1 (Atp6v1c1) from Mus musculus (Mouse).